Reading from the N-terminus, the 284-residue chain is Nucleotide-binding protein SPO0713 (284 aa).

An ATP-binding site is contributed by 3 to 10 (GPSGAGRS). 50 to 53 (DARN) is a GTP binding site.

This sequence belongs to the RapZ-like family.

In terms of biological role, displays ATPase and GTPase activities. The protein is Nucleotide-binding protein SPO0713 of Ruegeria pomeroyi (strain ATCC 700808 / DSM 15171 / DSS-3) (Silicibacter pomeroyi).